Consider the following 428-residue polypeptide: Serine--tRNA ligase (428 aa).

L-serine is bound at residue 231-233 (TAE). Position 262–264 (262–264 (RAE)) interacts with ATP. E285 is an L-serine binding site. 349–352 (EISS) is an ATP binding site. S385 contacts L-serine.

Belongs to the class-II aminoacyl-tRNA synthetase family. Type-1 seryl-tRNA synthetase subfamily. In terms of assembly, homodimer. The tRNA molecule binds across the dimer.

It localises to the cytoplasm. The catalysed reaction is tRNA(Ser) + L-serine + ATP = L-seryl-tRNA(Ser) + AMP + diphosphate + H(+). The enzyme catalyses tRNA(Sec) + L-serine + ATP = L-seryl-tRNA(Sec) + AMP + diphosphate + H(+). It participates in aminoacyl-tRNA biosynthesis; selenocysteinyl-tRNA(Sec) biosynthesis; L-seryl-tRNA(Sec) from L-serine and tRNA(Sec): step 1/1. Catalyzes the attachment of serine to tRNA(Ser). Is also able to aminoacylate tRNA(Sec) with serine, to form the misacylated tRNA L-seryl-tRNA(Sec), which will be further converted into selenocysteinyl-tRNA(Sec). The chain is Serine--tRNA ligase from Methylorubrum extorquens (strain PA1) (Methylobacterium extorquens).